A 529-amino-acid chain; its full sequence is Amino acid transporter heavy chain SLC3A2 (529 aa).

Residues 1 to 20 (MSQDTEVDMKEVELNELEPE) are disordered. The Cytoplasmic portion of the chain corresponds to 1–84 (MSQDTEVDMK…SPGWVRTRWA (84 aa)). S2 is subject to Phosphoserine. A Phosphothreonine modification is found at T5. Positions 7-20 (VDMKEVELNELEPE) are enriched in basic and acidic residues. K49 participates in a covalent cross-link: Glycyl lysine isopeptide (Lys-Gly) (interchain with G-Cter in ubiquitin). S65 carries the post-translational modification Phosphoserine. K66 participates in a covalent cross-link: Glycyl lysine isopeptide (Lys-Gly) (interchain with G-Cter in SUMO2). Residues 85-105 (LLLLFWLGWIGMLAGAVVIIV) traverse the membrane as a helical; Signal-anchor for type II membrane protein segment. The Extracellular portion of the chain corresponds to 106–529 (RAPRCRELPV…GLLLHFPYVA (424 aa)). N-linked (GlcNAc...) asparagine glycosylation occurs at N266. Phosphoserine occurs at positions 307 and 309. N-linked (GlcNAc...) asparagine glycans are attached at residues N325 and N405. Residue S426 is modified to Phosphoserine.

Belongs to the SLC3A transporter family. Disulfide-linked heterodimer with a non-glycosylated light chain (SLC7A5, SLC7A6, SLC7A7, SLC7A8, SLC7A10 or SLC7A11). Interacts with TLCD3A/CT120 and ICAM1. Constitutively and specifically associates with beta-1 integrins (alpha-2/beta-1, alpha-3/beta-1, alpha-5/beta-1 and alpha-6/beta-1), but minimally with alpha-4/beta-1. Interacts with LAPTM4B; recruits SLC3A2 and SLC7A5 to lysosomes to promote leucine uptake into these organelles and is required for mTORC1 activation. In terms of processing, phosphorylation on Ser-307 or Ser-309 and on Ser-426 by ecto-protein kinases favors heterotypic cell-cell interactions. N-glycosylated; N-glycosylation is crucial for trafficking and stability of SLC3A2 to the plasma membrane.

The protein localises to the apical cell membrane. The protein resides in the cell membrane. Its subcellular location is the cell junction. It is found in the lysosome membrane. It localises to the melanosome. The protein localises to the basolateral cell membrane. Its function is as follows. Acts as a chaperone that facilitates biogenesis and trafficking of functional transporters heterodimers to the plasma membrane. Forms heterodimer with SLC7 family transporters (SLC7A5, SLC7A6, SLC7A7, SLC7A8, SLC7A10 and SLC7A11), a group of amino-acid antiporters. Heterodimers function as amino acids exchangers, the specificity of the substrate depending on the SLC7A subunit. Heterodimers formed by SLC3A2/SLC7A6 or SLC3A2/SLC7A7 mediate the uptake of dibasic amino acids. Heterodimer SLC3A2/SLC7A11 functions as an antiporter by mediating the exchange of extracellular anionic L-cystine and intracellular L-glutamate across the cellular plasma membrane. SLC3A2/SLC7A10 translocates small neutral L- and D-amino acids across the plasma membrane. SLC3A2/SLC75 or SLC3A2/SLC7A8 translocates neutral amino acids with broad specificity, thyroid hormones and L-DOPA. SLC3A2 is essential for plasma membrane localization, stability, and the transport activity of SLC7A5 and SLC7A8. When associated with LAPTM4B, the heterodimer SLC7A5 is recruited to lysosomes to promote leucine uptake into these organelles, and thereby mediates mTORC1 activation. Modulates integrin-related signaling and is essential for integrin-dependent cell spreading, migration and tumor progression. The chain is Amino acid transporter heavy chain SLC3A2 from Oryctolagus cuniculus (Rabbit).